The following is a 500-amino-acid chain: Cytochrome P450 2D16 (500 aa).

Ser-249 is subject to Phosphoserine. Cys-446 contacts heme.

The protein belongs to the cytochrome P450 family. Heme is required as a cofactor. Expressed at high levels in the inner zone of the adrenal cortex.

It is found in the endoplasmic reticulum membrane. The protein resides in the microsome membrane. The enzyme catalyses an organic molecule + reduced [NADPH--hemoprotein reductase] + O2 = an alcohol + oxidized [NADPH--hemoprotein reductase] + H2O + H(+). Functionally, cytochromes P450 are a group of heme-thiolate monooxygenases. In liver microsomes, this enzyme is involved in an NADPH-dependent electron transport pathway. It oxidizes a variety of structurally unrelated compounds, including steroids, fatty acids, and xenobiotics. The protein is Cytochrome P450 2D16 (CYP2D16) of Cavia porcellus (Guinea pig).